We begin with the raw amino-acid sequence, 823 residues long: DNA topoisomerase 4 subunit A (823 aa).

The 467-residue stretch at L30–L496 folds into the Topo IIA-type catalytic domain. Y118 serves as the catalytic O-(5'-phospho-DNA)-tyrosine intermediate.

Belongs to the type II topoisomerase GyrA/ParC subunit family. ParC type 2 subfamily. As to quaternary structure, heterotetramer composed of ParC and ParE.

The protein localises to the cell membrane. It catalyses the reaction ATP-dependent breakage, passage and rejoining of double-stranded DNA.. With respect to regulation, inhibited by quinolones, such as levofloxacin. In terms of biological role, topoisomerase IV is essential for chromosome segregation. It relaxes supercoiled DNA. Performs the decatenation events required during the replication of a circular DNA molecule. This is DNA topoisomerase 4 subunit A from Streptococcus pneumoniae serotype 4 (strain ATCC BAA-334 / TIGR4).